A 413-amino-acid polypeptide reads, in one-letter code: MNAKRIRGLLIFAAVIAIAVLIWRHFTQTSPAAPGTSEQHAARTSHSGNNSSGNGGGRRAAMRTLAPVQAAVTQSASVPYYLSGLGTVTSANTVTLRSRVNGQLMALHFQEGQQVKAGDLLAEIDPRPFQVELTQAQGQLAKDRAVLANAQQDLARYQQLVKTNLISRQELDAQTAAVRQAEGTLKADEGAVASAQLQLDYSKITAPISGRIGLKQVDVGNYITSGDTNGIVVITQTYPIDVVFTVPEAEISTILNAQKSGQPPMVEAWDRANQKKLSQGTLLSMDNQIDATTGTIKLKARFDNLDDALFPNQFVNIRMKVDTLKNAVVAPSAAVQMGNEGRFVWILNDKNEVSKRQVTTSIQYGQLVVVTAGLDADVKVVTDGIDRLTEGAKVEVVPSALTEKTPAIAGEKS.

The first 32 residues, 1-32 (MNAKRIRGLLIFAAVIAIAVLIWRHFTQTSPA), serve as a signal peptide directing secretion. Over residues 32–46 (AAPGTSEQHAARTSH) the composition is skewed to polar residues. The interval 32–59 (AAPGTSEQHAARTSHSGNNSSGNGGGRR) is disordered.

This sequence belongs to the membrane fusion protein (MFP) (TC 8.A.1) family. Part of a tripartite efflux system composed of MdtA, MdtB and MdtC.

It localises to the cell inner membrane. The polypeptide is Multidrug resistance protein MdtA (Pectobacterium carotovorum subsp. carotovorum (strain PC1)).